The following is a 460-amino-acid chain: MSGKSIFDKLWDRHVITGDEGQPQLMYVDQHYIHEVTSPQAFQGLRDAGRKVRRPDLTFGTFDHNVPTVNIFDIRDAISKAQIDKLAENVIEFGIDNASHGSDKQGIVHMVGPETGRTQPGKFIVCGDSHTATHGAFGAIAFGIGTSEVEHVFATQTLWQVKPKKMLVEFTGKPQKGIYSKDYILALIAKYGVACGVGYVVEYRGEAIDRLTMEERMTICNMSIEFGSKMGIMNPDQTTYDYMRGRECVPEDFDAAVADWKTLVSDDDAEYDKVIRMDVSELAPMVTWGTNPSMGVDFDTPFPEVRDMNDERAYHYMGLRPGQKAEDINLGYIFIGSCTNARLSDLQLAARIVKGKKISPNLTAIVVPGSRPVKRAAEKIGLDKIFKDAGFEWREPGCSMCLGMNPDKVPDGVHCASTSNRNFEDRQGFGAKTHLCSPAMAAAAAIAGHFVDVRRMPEVQ.

3 residues coordinate [4Fe-4S] cluster: Cys-338, Cys-398, and Cys-401.

This sequence belongs to the aconitase/IPM isomerase family. LeuC type 1 subfamily. In terms of assembly, heterodimer of LeuC and LeuD. [4Fe-4S] cluster is required as a cofactor.

The catalysed reaction is (2R,3S)-3-isopropylmalate = (2S)-2-isopropylmalate. Its pathway is amino-acid biosynthesis; L-leucine biosynthesis; L-leucine from 3-methyl-2-oxobutanoate: step 2/4. In terms of biological role, catalyzes the isomerization between 2-isopropylmalate and 3-isopropylmalate, via the formation of 2-isopropylmaleate. The polypeptide is 3-isopropylmalate dehydratase large subunit (Streptococcus thermophilus (strain ATCC BAA-491 / LMD-9)).